We begin with the raw amino-acid sequence, 439 residues long: Ribosomal protein uS12 methylthiotransferase RimO (439 aa).

The MTTase N-terminal domain maps to 3–113 (HKVGFVSLGC…VVNAVHQHLP (111 aa)). [4Fe-4S] cluster-binding residues include Cys-12, Cys-48, Cys-77, Cys-144, Cys-148, and Cys-151. Positions 130–367 (LTPRHYAYLK…MQVQAEISRN (238 aa)) constitute a Radical SAM core domain. In terms of domain architecture, TRAM spans 370-436 (KNKIGSTQTV…DYDLYGDLEY (67 aa)).

The protein belongs to the methylthiotransferase family. RimO subfamily. [4Fe-4S] cluster is required as a cofactor.

It is found in the cytoplasm. It carries out the reaction L-aspartate(89)-[ribosomal protein uS12]-hydrogen + (sulfur carrier)-SH + AH2 + 2 S-adenosyl-L-methionine = 3-methylsulfanyl-L-aspartate(89)-[ribosomal protein uS12]-hydrogen + (sulfur carrier)-H + 5'-deoxyadenosine + L-methionine + A + S-adenosyl-L-homocysteine + 2 H(+). Functionally, catalyzes the methylthiolation of an aspartic acid residue of ribosomal protein uS12. In Legionella pneumophila (strain Paris), this protein is Ribosomal protein uS12 methylthiotransferase RimO.